A 143-amino-acid polypeptide reads, in one-letter code: MNKTITPSLETIERNWFLVDAKDKTLGRLATEIATVLRGKNKPTFTPHLDTGDFVIVVNAEKVEVTGKKASQKLYRRHSGRPGGMKIEKFESLQERIPERIIEQAVKGMLPHNSLGRQQFKKLKVYKGADHPHAAQNPVLLNS.

Belongs to the universal ribosomal protein uL13 family. Part of the 50S ribosomal subunit.

Its function is as follows. This protein is one of the early assembly proteins of the 50S ribosomal subunit, although it is not seen to bind rRNA by itself. It is important during the early stages of 50S assembly. This chain is Large ribosomal subunit protein uL13, found in Prochlorococcus marinus (strain MIT 9301).